The primary structure comprises 1004 residues: Copper-transporting ATPase (1004 aa).

At 1-262 the chain is on the cytoplasmic side; that stretch reads MREVILAVHG…FWKKNSIKST (262 aa). HMA domains follow at residues 2–67 and 80–146; these read REVI…FDCE and KEGL…FDSN. The Cu(+) site is built by Cys-13, Cys-16, Cys-91, and Cys-94. The helical transmembrane segment at 263 to 283 threads the bilayer; the sequence is LLAIICMLLYMIVPMMWPTIV. The Lumenal, vesicle segment spans residues 284–303; the sequence is QDRIFPYKETSFVRGLFYRD. The helical transmembrane segment at 304–324 threads the bilayer; sequence ILGVILASYIQFSVGFYFYKA. The Cytoplasmic segment spans residues 325–335; it reads AWASLKHGSGT. A helical membrane pass occupies residues 336–356; it reads MDTLVCVSTTCAYTFSVFSLV. Residues 357–370 are Lumenal, vesicle-facing; sequence HNMFHPSSTGKLPR. The chain crosses the membrane as a helical span at residues 371 to 391; that stretch reads IVFDTSIMIISYISIGKYLET. The Cytoplasmic segment spans residues 392–528; sequence LAKSQTSTAL…IQGYADYLAS (137 aa). Residues 529–549 form a helical membrane-spanning segment; sequence IFVPGILILAVLTFFIWCFIL. Topologically, residues 550–577 are lumenal, vesicle; the sequence is NISANPPVAFTANTKADNFFICLQTATS. A helical membrane pass occupies residues 578–598; the sequence is VVIVACPCALGLATPTAIMVG. Residues 599-901 lie on the Cytoplasmic side of the membrane; it reads TGVGAQNGVL…LKTFKRIKLN (303 aa). Asp-627 (4-aspartylphosphate intermediate) is an active-site residue. Mg(2+) is bound by residues Asp-838 and Asp-842. The chain crosses the membrane as a helical span at residues 902-924; the sequence is LFWALCYNIFMIPIAMGVLIPWG. Topologically, residues 925–927 are lumenal, vesicle; it reads ITL. A helical transmembrane segment spans residues 928 to 950; it reads PPMLAGLAMAFSSVSVVLSSLML. Residues 951–1004 lie on the Cytoplasmic side of the membrane; the sequence is KKWTPPDIESHGISDFKSKFSIGNFWSRLFSTRAIAGEQDIESQAGLMSNEEVL.

It belongs to the cation transport ATPase (P-type) (TC 3.A.3) family. Type IB subfamily. Interacts with the copper chaperone ATX1 via the copper anion.

The protein resides in the golgi apparatus. Its subcellular location is the trans-Golgi network membrane. The enzyme catalyses Cu(+)(in) + ATP + H2O = Cu(+)(out) + ADP + phosphate + H(+). Its function is as follows. Copper-transporting P-type ATPase necessary for the proper uptake of iron. Required for export of copper from cytosol into extracytosolic compartment. Retrieves copper from the metallochaperone ATX1 and incorporates it into trans-Golgi vesicles where they are acquired by the cell-surface iron transporter FET3. Required the production of inositolphosphorylceramide D, probably by delivering copper to a yet to be identified enzyme. The protein is Copper-transporting ATPase of Saccharomyces cerevisiae (strain ATCC 204508 / S288c) (Baker's yeast).